A 56-amino-acid polypeptide reads, in one-letter code: uncharacterized protein (56 aa).

This is an uncharacterized protein from Borreliella burgdorferi (strain ATCC 35210 / DSM 4680 / CIP 102532 / B31) (Borrelia burgdorferi).